The sequence spans 226 residues: uncharacterized protein (226 aa).

It belongs to the HisA/HisF family.

This is an uncharacterized protein from Methanocaldococcus jannaschii (strain ATCC 43067 / DSM 2661 / JAL-1 / JCM 10045 / NBRC 100440) (Methanococcus jannaschii).